The chain runs to 271 residues: Multivesicular body subunit 12A (271 aa).

One can recognise an MABP domain in the interval 7–149 (SAPLAGLVWS…GFAIWCKKSK (143 aa)). Threonine 128 is subject to Phosphothreonine. Residues 149–192 (KAPRPVPKPRTLSQDMRGLSLDPPKEPSKGSHPERTLSRLGSRA) are disordered. The short motif at 153–158 (PVPKPR) is the SH3-binding element. Phosphoserine is present on residues serine 161 and serine 168. Residues 171-185 (PPKEPSKGSHPERTL) are compositionally biased toward basic and acidic residues. The tract at residues 190-271 (SRASTLRRTD…AAARLPPSVS (82 aa)) is interaction with TSG101, VPS37B and VPS28. Residues serine 193 and serine 200 each carry the phosphoserine modification. Tyrosine 202 is subject to Phosphotyrosine. Residue serine 205 is modified to Phosphoserine. A UMA domain is found at 213–263 (MDGVPFTLHPRFEGKSCGPLNLSAFGDLTIKSLADIEKEYNYGFVVEKTAA).

Belongs to the MVB12 family. Component of the ESCRT-I complex (endosomal sorting complex required for transport I) which consists of TSG101, VPS28, a VPS37 protein (VPS37A to -D) and MVB12A or MVB12B in a 1:1:1:1 stoichiometry. Interacts with CD2AP and CIN85/SH3KBP1. Interacts with CD2AP (via one of the SH3 domains). Interacts with TSG101; the association appears to be mediated by the TSG101-VPS37 binary subcomplex. Interacts with VPS28. Interacts with VPS37B; the association appears to be mediated by the TSG101-VPS37 binary subcomplex. Interacts with VPS37C; the association appears to be mediated by the TSG101-VPS37 binary subcomplex. Interacts with VPS37D; the association appears to be mediated by the TSG101-VPS37 binary subcomplex. Interacts with CEP55. In terms of processing, phosphorylated on Tyr-202 upon EGF stimulation. Phosphorylation is required for interaction with CD2AP and CIN85/SH3KBP1.

It localises to the cytoplasm. Its subcellular location is the cytoskeleton. The protein localises to the nucleus. It is found in the endosome. The protein resides in the microtubule organizing center. It localises to the centrosome. Its subcellular location is the late endosome membrane. Functionally, component of the ESCRT-I complex, a regulator of vesicular trafficking process. Required for the sorting of endocytic ubiquitinated cargos into multivesicular bodies. May be involved in the ligand-mediated internalization and down-regulation of EGF receptor. The polypeptide is Multivesicular body subunit 12A (Mvb12a) (Mus musculus (Mouse)).